The chain runs to 32 residues: Kappa-theraphotoxin-Gr2b (32 aa).

Disulfide bonds link Cys-2–Cys-16, Cys-9–Cys-21, and Cys-15–Cys-25.

Belongs to the neurotoxin 30 (phrixotoxin) family. Expressed by the venom gland.

The protein resides in the secreted. In terms of biological role, binds the voltage-sensor domain of the potassium channel KvAP (from the archaeon Aeropyrum pernix) and affects channel gating. This chain is Kappa-theraphotoxin-Gr2b, found in Grammostola rosea (Chilean rose tarantula).